Here is a 315-residue protein sequence, read N- to C-terminus: Transcription factor MafAa (315 aa).

The span at 52–104 (STPISTPCSSVPSSPSFCAPSPGSQPGQNLVNGVNNNNNNSGNGNNNTQGSSG) shows a compositional bias: low complexity. 2 disordered regions span residues 52–108 (STPI…KPQM) and 169–191 (ATNG…AHAR). Positions 172-189 (GHHHPVHHHHHHHGHHAH) are enriched in basic residues. A basic motif region spans residues 223 to 248 (RLKQKRRTLKNRGYAQSCRYKRVQQR). Positions 223–286 (RLKQKRRTLK…DLYKEKYEKL (64 aa)) constitute a bZIP domain. The tract at residues 229–243 (RTLKNRGYAQSCRYK) is interaction with DNA. Residues 251 to 272 (LESEKCTLQSQVEQLKQDVARL) form a leucine-zipper region. The segment at 290–315 (AFNGGGNTRDPSSGNHVKTTSTDFFM) is disordered. The span at 298–315 (RDPSSGNHVKTTSTDFFM) shows a compositional bias: polar residues.

This sequence belongs to the bZIP family. Maf subfamily.

Its subcellular location is the nucleus. Its function is as follows. Transcription factor, possibly involved in transcription regulation during lens development, including that of crystallin genes. Specifically binds to the alphaCE2 enhancer element of crystallin gene. The protein is Transcription factor MafAa (mafaa) of Danio rerio (Zebrafish).